The primary structure comprises 231 residues: 4-hydroxy-tetrahydrodipicolinate reductase (231 aa).

NAD(+) contacts are provided by residues Asp33, 68–70 (CTT), and 92–95 (SSNT). The Proton donor/acceptor role is filled by His124. His125 is a binding site for (S)-2,3,4,5-tetrahydrodipicolinate. Catalysis depends on Lys128, which acts as the Proton donor. 134 to 135 (GT) lines the (S)-2,3,4,5-tetrahydrodipicolinate pocket.

This sequence belongs to the DapB family.

It is found in the cytoplasm. It carries out the reaction (S)-2,3,4,5-tetrahydrodipicolinate + NAD(+) + H2O = (2S,4S)-4-hydroxy-2,3,4,5-tetrahydrodipicolinate + NADH + H(+). The enzyme catalyses (S)-2,3,4,5-tetrahydrodipicolinate + NADP(+) + H2O = (2S,4S)-4-hydroxy-2,3,4,5-tetrahydrodipicolinate + NADPH + H(+). It participates in amino-acid biosynthesis; L-lysine biosynthesis via DAP pathway; (S)-tetrahydrodipicolinate from L-aspartate: step 4/4. In terms of biological role, catalyzes the conversion of 4-hydroxy-tetrahydrodipicolinate (HTPA) to tetrahydrodipicolinate. The sequence is that of 4-hydroxy-tetrahydrodipicolinate reductase from Brachyspira hyodysenteriae (strain ATCC 49526 / WA1).